Consider the following 638-residue polypeptide: ATP-dependent zinc metalloprotease FtsH (638 aa).

Over 1–11 (MSQKGKNKKWR) the chain is Cytoplasmic. Residues 12–32 (SAGLYALLAIVLISLATTFLG) form a helical membrane-spanning segment. The Lumenal segment spans residues 33–114 (NRPPERLEIS…LAVRPVQEEG (82 aa)). Residues 115-135 (LLGRILSTFFLPVLLLLGLFF) form a helical membrane-spanning segment. At 136–638 (LLRRAQNGPG…TLPMAVNAGA (503 aa)) the chain is on the cytoplasmic side. 209–216 (GPPGTGKT) lines the ATP pocket. Histidine 431 contributes to the Zn(2+) binding site. Glutamate 432 is an active-site residue. Histidine 435 and aspartate 510 together coordinate Zn(2+).

This sequence in the central section; belongs to the AAA ATPase family. It in the C-terminal section; belongs to the peptidase M41 family. Homohexamer. The cofactor is Zn(2+).

It is found in the cellular thylakoid membrane. Acts as a processive, ATP-dependent zinc metallopeptidase for both cytoplasmic and membrane proteins. Plays a role in the quality control of integral membrane proteins. This is ATP-dependent zinc metalloprotease FtsH from Synechococcus sp. (strain JA-2-3B'a(2-13)) (Cyanobacteria bacterium Yellowstone B-Prime).